Reading from the N-terminus, the 184-residue chain is MTWRSEHIWIELITGSRKISNFCWAFILFLGSLGFLLVGTSSYLGRNLISFFPPQQIIFFPQGLVMSFYGIAGLFISSYLWCTISWNVGSGYDRFDRKEGIVCIFRWGFPGKNRRIFLRFLIKDIQSVRIEVKEGISARRVLYMDIRGQGSIPLTRTDENLTPREIEQKAAELAYFLRVPIEVF.

2 helical membrane passes run I19 to G39 and I57 to S77.

It belongs to the Ycf4 family.

The protein resides in the plastid. It is found in the chloroplast thylakoid membrane. Functionally, seems to be required for the assembly of the photosystem I complex. This chain is Photosystem I assembly protein Ycf4, found in Nicotiana sylvestris (Wood tobacco).